Here is a 170-residue protein sequence, read N- to C-terminus: F1 capsule antigen (170 aa).

Positions 1–21 (MKKISSVIAIALFGTIATANA) are cleaved as a signal peptide. Residues 100–150 (GNNHQFTTKVIGKDSRDFDISPKVNGENLVGDDVVLATGSQDFFVRSIGSK) form a contains potential antigenic determinants that may stimulate T-cells region.

The protein localises to the secreted. Its subcellular location is the capsule. The sequence is that of F1 capsule antigen (caf1) from Yersinia pestis.